The primary structure comprises 102 residues: UPF0473 protein SAS1551 (102 aa).

It belongs to the UPF0473 family.

This Staphylococcus aureus (strain MSSA476) protein is UPF0473 protein SAS1551.